The chain runs to 317 residues: MPIHLECMSHTPLHGYFDPAPEVVAEVERVQRVARERVDAFDPELVIVFAPDHYNGFFYDVMPQFCIGVRATAIGDFNSAAGPLPVARDVALALADAALASDIDVAVSYRMQVDHGCAQALDVLTGGIDRYPVVPVFINSVAPPMASCRRARLLGDAIGRAAARMNRRVLLIGSGGMSHEPPVPEIAAADDVVAERLIAGRNPSPESRNARQSRTIAAAKAFAAGDSRLHPLNPAWDRALLELLERGEIAAADGLTNEAITRDAGKSAHEIRTWVAAFGALAASGPYAASIDYYRAIPEWIAGFGAMHAHEQTLSRR.

The active-site Proton donor is His115. His179 acts as the Proton acceptor in catalysis.

It belongs to the LigB/MhpB extradiol dioxygenase family. Homotetramer. The cofactor is Fe(2+).

The catalysed reaction is 3-(2,3-dihydroxyphenyl)propanoate + O2 = (2Z,4E)-2-hydroxy-6-oxonona-2,4-dienedioate + H(+). The enzyme catalyses (2E)-3-(2,3-dihydroxyphenyl)prop-2-enoate + O2 = (2Z,4E,7E)-2-hydroxy-6-oxonona-2,4,7-trienedioate + H(+). It participates in aromatic compound metabolism; 3-phenylpropanoate degradation. Functionally, catalyzes the non-heme iron(II)-dependent oxidative cleavage of 2,3-dihydroxyphenylpropionic acid and 2,3-dihydroxicinnamic acid into 2-hydroxy-6-ketononadienedioate and 2-hydroxy-6-ketononatrienedioate, respectively. This Paraburkholderia phymatum (strain DSM 17167 / CIP 108236 / LMG 21445 / STM815) (Burkholderia phymatum) protein is 2,3-dihydroxyphenylpropionate/2,3-dihydroxicinnamic acid 1,2-dioxygenase.